A 106-amino-acid chain; its full sequence is Iron-sulfur cluster assembly protein CyaY (106 aa).

The protein belongs to the frataxin family.

Its function is as follows. Involved in iron-sulfur (Fe-S) cluster assembly. May act as a regulator of Fe-S biogenesis. This is Iron-sulfur cluster assembly protein CyaY from Salmonella typhimurium (strain LT2 / SGSC1412 / ATCC 700720).